Reading from the N-terminus, the 104-residue chain is Large ribosomal subunit protein bL28 (104 aa).

This sequence belongs to the bacterial ribosomal protein bL28 family.

The polypeptide is Large ribosomal subunit protein bL28 (Wolbachia pipientis wMel).